Here is a 180-residue protein sequence, read N- to C-terminus: Small ribosomal subunit protein uS4 (180 aa).

Residues 104–166 (RRLQTIVHRK…PTSPFKNNPP (63 aa)) form the S4 RNA-binding domain. The tract at residues 155–180 (FYPTSPFKNNPPTAGQGEVNVEQKGN) is disordered.

The protein belongs to the universal ribosomal protein uS4 family. Part of the 30S ribosomal subunit. Contacts protein S5. The interaction surface between S4 and S5 is involved in control of translational fidelity.

Its function is as follows. One of the primary rRNA binding proteins, it binds directly to 16S rRNA where it nucleates assembly of the body of the 30S subunit. Functionally, with S5 and S12 plays an important role in translational accuracy. This Metallosphaera sedula (strain ATCC 51363 / DSM 5348 / JCM 9185 / NBRC 15509 / TH2) protein is Small ribosomal subunit protein uS4.